Consider the following 766-residue polypeptide: U3 small nucleolar RNA-associated protein 14 homolog C (766 aa).

Residues 14–42 form a disordered region; it reads HQEELVDLPKNYPLSENEDEGDSDGERKH. Phosphoserine occurs at positions 28, 51, 76, and 80. Lys-121 participates in a covalent cross-link: Glycyl lysine isopeptide (Lys-Gly) (interchain with G-Cter in SUMO2). Thr-204 carries the post-translational modification Phosphothreonine. Coiled-coil stretches lie at residues 216–245 and 316–346; these read LEEAKMHRAELQRARALQSYYEAKARKEKK and LEARQAMQEQLAKNKELTQKLQVASESEEEE. The tract at residues 365–563 is disordered; it reads MNVDGPNPWM…EQLINLQNFL (199 aa). Over residues 396–405 the composition is skewed to low complexity; the sequence is ELAAHEVSAS. A phosphoserine mark is found at Ser-403 and Ser-405. Residues 407–434 are compositionally biased toward basic and acidic residues; that stretch reads AEERPVAEEEILLREFEERQSLRKRSEL. Ser-443 is modified (phosphoserine). Lys-447 is covalently cross-linked (Glycyl lysine isopeptide (Lys-Gly) (interchain with G-Cter in SUMO2)). Ser-451 is modified (phosphoserine). Residues 452-470 adopt a coiled-coil conformation; it reads QEVLSELRALSQKLKEKHQ. The span at 466-475 shows a compositional bias: basic residues; sequence KEKHQSRKQK. Positions 502 to 527 are enriched in basic and acidic residues; that stretch reads RSERVQTLEELEELGKEDCFQNKELP. Residue Lys-517 forms a Glycyl lysine isopeptide (Lys-Gly) (interchain with G-Cter in SUMO2) linkage. A compositionally biased stretch (polar residues) spans 533-542; that stretch reads GQQSERTPNN. The segment covering 545–555 has biased composition (basic and acidic residues); that stretch reads DAPKEKKEKEQ. The residue at position 567 (Ser-567) is a Phosphoserine. Lys-732 participates in a covalent cross-link: Glycyl lysine isopeptide (Lys-Gly) (interchain with G-Cter in SUMO2). Residues 734 to 766 are disordered; it reads EDVGYQSSSRSDLPVIQRNPKRITTRHNKEEKL.

Belongs to the UTP14 family. Expressed in testis.

The protein localises to the nucleus. The protein resides in the nucleolus. In terms of biological role, essential for spermatogenesis. May be required specifically for ribosome biogenesis and hence protein synthesis during male meiosis. This Homo sapiens (Human) protein is U3 small nucleolar RNA-associated protein 14 homolog C (UTP14C).